We begin with the raw amino-acid sequence, 924 residues long: Mediator of RNA polymerase II transcription subunit 16 (924 aa).

Belongs to the Mediator complex subunit 16 family. In terms of assembly, component of the Mediator complex.

It localises to the nucleus. In terms of biological role, component of the Mediator complex, a coactivator involved in the regulated transcription of nearly all RNA polymerase II-dependent genes. Mediator functions as a bridge to convey information from gene-specific regulatory proteins to the basal RNA polymerase II transcription machinery. Mediator is recruited to promoters by direct interactions with regulatory proteins and serves as a scaffold for the assembly of a functional preinitiation complex with RNA polymerase II and the general transcription factors. This chain is Mediator of RNA polymerase II transcription subunit 16 (SIN4), found in Yarrowia lipolytica (strain CLIB 122 / E 150) (Yeast).